An 80-amino-acid chain; its full sequence is Translation initiation factor IF-1, chloroplastic (80 aa).

The region spanning 1–74 is the S1-like domain; that stretch reads MKEQKWIHEG…TRGRIIYRLR (74 aa).

Belongs to the IF-1 family. In terms of assembly, component of the 30S ribosomal translation pre-initiation complex which assembles on the 30S ribosome in the order IF-2 and IF-3, IF-1 and N-formylmethionyl-tRNA(fMet); mRNA recruitment can occur at any time during PIC assembly.

It is found in the plastid. Its subcellular location is the chloroplast. One of the essential components for the initiation of protein synthesis. Stabilizes the binding of IF-2 and IF-3 on the 30S subunit to which N-formylmethionyl-tRNA(fMet) subsequently binds. Helps modulate mRNA selection, yielding the 30S pre-initiation complex (PIC). Upon addition of the 50S ribosomal subunit IF-1, IF-2 and IF-3 are released leaving the mature 70S translation initiation complex. The protein is Translation initiation factor IF-1, chloroplastic of Illicium parviflorum (Yellow anise tree).